Reading from the N-terminus, the 635-residue chain is Threonine--tRNA ligase (635 aa).

The 61-residue stretch at 1 to 61 (MIKITLKDGS…KEDAALELLT (61 aa)) folds into the TGS domain. A catalytic region spans residues 242–532 (DHRKLGQELD…LTEHFAGAFP (291 aa)). The Zn(2+) site is built by C333, H384, and H509.

Belongs to the class-II aminoacyl-tRNA synthetase family. As to quaternary structure, homodimer. The cofactor is Zn(2+).

The protein resides in the cytoplasm. The enzyme catalyses tRNA(Thr) + L-threonine + ATP = L-threonyl-tRNA(Thr) + AMP + diphosphate + H(+). Catalyzes the attachment of threonine to tRNA(Thr) in a two-step reaction: L-threonine is first activated by ATP to form Thr-AMP and then transferred to the acceptor end of tRNA(Thr). Also edits incorrectly charged L-seryl-tRNA(Thr). The polypeptide is Threonine--tRNA ligase (Desulforamulus reducens (strain ATCC BAA-1160 / DSM 100696 / MI-1) (Desulfotomaculum reducens)).